Here is an 836-residue protein sequence, read N- to C-terminus: Neuroligin-2 (836 aa).

The N-terminal stretch at 1–14 (MWLLALCLVGLAGA) is a signal peptide. The Extracellular segment spans residues 15–678 (QRGGGGPGGG…DSRDYSTELS (664 aa)). 2 N-linked (GlcNAc...) asparagine glycosylation sites follow: N98 and N136. Cystine bridges form between C106–C141, C317–C328, and C487–C521. N-linked (GlcNAc...) asparagine glycosylation occurs at N522. The tract at residues 623–661 (PPYATRWPPRTPGPGTSGTRRPPPPATLPPESDIDLGPR) is disordered. Residues 679 to 699 (VTVAVGASLLFLNILAFAALY) traverse the membrane as a helical segment. The tract at residues 679–699 (VTVAVGASLLFLNILAFAALY) is required for interaction with LHFPL4. The Cytoplasmic segment spans residues 700–836 (YKRDRRQELR…LPHPHSTTRV (137 aa)). 2 disordered regions span residues 711 to 735 (RRLS…TAGR) and 791 to 836 (LLPS…TTRV). Phosphoserine occurs at positions 714 and 719. Positions 717 to 728 (GGSGSGVPGGGP) are enriched in gly residues. Positions 796–819 (LGPPPPPPPPSLHPFGPFPPPPPT) are enriched in pro residues. The span at 824-836 (NNTLPHPHSTTRV) shows a compositional bias: polar residues.

This sequence belongs to the type-B carboxylesterase/lipase family. Interacts with neurexins NRXN1, NRXN2 and NRXN3. Interaction with neurexins is mediated by heparan sulfate glycan modification on neurexin. Interacts (via its C-terminus) with DLG4/PSD-95 (via PDZ domain 3). Interacts with PATJ. Interacts with GPHN. Interacts with MDGA1 and MDGA2. Found in a complex with MAGI2 and IGSF9B, where it interacts with MAGI2 (via WW 1, WW 2 and PDZ 2 domains). Identified in a complex of 720 kDa composed of LHFPL4, NLGN2, GABRA1, GABRB2, GABRG2 and GABRB3. Interacts with LHFPL4; leading to mutual regulation of the protein level and synaptic clustering. Interacts with GABRA1. As to expression, detected on hippocampus neurons, especially at inhibitory synapses. Detected in retina, in the outer and inner plexiform layer. Detected in pancreas, in islet of Langerhans beta cells (at protein level). Expressed in brain, spinal cord and dorsal root ganglion. Detected in brain, and at lower levels in pancreas islet beta cells.

It is found in the cell membrane. It localises to the postsynaptic cell membrane. The protein resides in the presynaptic cell membrane. Its function is as follows. Transmembrane scaffolding protein involved in cell-cell interactions via its interactions with neurexin family members. Mediates cell-cell interactions both in neurons and in other types of cells, such as Langerhans beta cells. Plays a role in synapse function and synaptic signal transmission, especially via gamma-aminobutyric acid receptors (GABA(A) receptors). Functions by recruiting and clustering synaptic proteins. Promotes clustering of postsynaptic GABRG2 and GPHN. Promotes clustering of postsynaptic LHFPL4. Modulates signaling by inhibitory synapses, and thereby plays a role in controlling the ratio of signaling by excitatory and inhibitory synapses and information processing. Required for normal signal amplitude from inhibitory synapses, but is not essential for normal signal frequency. May promote the initial formation of synapses, but is not essential for this. In vitro, triggers the de novo formation of presynaptic structures. Mediates cell-cell interactions between Langerhans beta cells and modulates insulin secretion. The chain is Neuroligin-2 (Nlgn2) from Rattus norvegicus (Rat).